Here is a 156-residue protein sequence, read N- to C-terminus: Small ribosomal subunit protein uS7 (156 aa).

Belongs to the universal ribosomal protein uS7 family. As to quaternary structure, part of the 30S ribosomal subunit. Contacts proteins S9 and S11.

In terms of biological role, one of the primary rRNA binding proteins, it binds directly to 16S rRNA where it nucleates assembly of the head domain of the 30S subunit. Is located at the subunit interface close to the decoding center, probably blocks exit of the E-site tRNA. The sequence is that of Small ribosomal subunit protein uS7 from Streptomyces avermitilis (strain ATCC 31267 / DSM 46492 / JCM 5070 / NBRC 14893 / NCIMB 12804 / NRRL 8165 / MA-4680).